The following is a 431-amino-acid chain: 5-methylthioadenosine/S-adenosylhomocysteine deaminase (431 aa).

Positions 60 and 62 each coordinate Zn(2+). Positions 89 and 182 each coordinate substrate. His-209 contributes to the Zn(2+) binding site. Residues Glu-212 and Asp-297 each coordinate substrate. Residue Asp-297 participates in Zn(2+) binding.

Belongs to the metallo-dependent hydrolases superfamily. MTA/SAH deaminase family. Zn(2+) serves as cofactor.

The catalysed reaction is S-adenosyl-L-homocysteine + H2O + H(+) = S-inosyl-L-homocysteine + NH4(+). The enzyme catalyses S-methyl-5'-thioadenosine + H2O + H(+) = S-methyl-5'-thioinosine + NH4(+). Catalyzes the deamination of 5-methylthioadenosine and S-adenosyl-L-homocysteine into 5-methylthioinosine and S-inosyl-L-homocysteine, respectively. Is also able to deaminate adenosine. The chain is 5-methylthioadenosine/S-adenosylhomocysteine deaminase from Natronomonas pharaonis (strain ATCC 35678 / DSM 2160 / CIP 103997 / JCM 8858 / NBRC 14720 / NCIMB 2260 / Gabara) (Halobacterium pharaonis).